A 208-amino-acid chain; its full sequence is Tektin bundle-interacting protein 1 (208 aa).

Microtubule inner protein component of sperm flagellar doublet microtubules. Expressed in trachea multiciliated cells.

It is found in the cytoplasm. The protein resides in the cytoskeleton. The protein localises to the cilium axoneme. Its subcellular location is the flagellum axoneme. Microtubule inner protein (MIP) part of the dynein-decorated doublet microtubules (DMTs) in cilia axoneme, which is required for motile cilia beating. Located at the center of the tektin bundle where may function to recruit tektins or stabilize the bundle. In Bos taurus (Bovine), this protein is Tektin bundle-interacting protein 1 (TEKTIP1).